A 336-amino-acid polypeptide reads, in one-letter code: Adenylate isopentenyltransferase 3, chloroplastic (336 aa).

A chloroplast-targeting transit peptide spans 1-55 (MIMKISMAMCKQPLPPSPTLDFPPARFGPNMLTLNPYGPKDKVVVIMGATGTGKS). 48–55 (GATGTGKS) contacts ATP. C333 is modified (cysteine methyl ester). A lipid anchor (S-farnesyl cysteine) is attached at C333. Positions 334–336 (LVA) are cleaved as a propeptide — removed in mature form.

Belongs to the IPP transferase family. Farnesylated. As to expression, expressed the phloem companion cells.

The protein resides in the plastid. It is found in the chloroplast. It localises to the nucleus membrane. Its subcellular location is the cytoplasm. It carries out the reaction dimethylallyl diphosphate + ADP = N(6)-(dimethylallyl)adenosine 5'-diphosphate + diphosphate. The enzyme catalyses dimethylallyl diphosphate + ATP = N(6)-(dimethylallyl)adenosine 5'-triphosphate + diphosphate. Functionally, involved in cytokinin biosynthesis. Catalyzes the transfer of an isopentenyl group from dimethylallyl diphosphate (DMAPP) to ATP and ADP. This is Adenylate isopentenyltransferase 3, chloroplastic (IPT3) from Arabidopsis thaliana (Mouse-ear cress).